The chain runs to 86 residues: Small ribosomal subunit protein bS16 (86 aa).

This sequence belongs to the bacterial ribosomal protein bS16 family.

The chain is Small ribosomal subunit protein bS16 from Methylacidiphilum infernorum (isolate V4) (Methylokorus infernorum (strain V4)).